Consider the following 210-residue polypeptide: 3-hexulose-6-phosphate synthase (210 aa).

This sequence belongs to the HPS/KGPDC family. HPS subfamily.

It carries out the reaction D-ribulose 5-phosphate + formaldehyde = D-arabino-hex-3-ulose 6-phosphate. The protein operates within one-carbon metabolism; formaldehyde assimilation via RuMP pathway; D-fructose 6-phosphate from D-ribulose 5-phosphate and formaldehyde: step 1/2. Catalyzes the condensation of ribulose 5-phosphate with formaldehyde to form 3-hexulose 6-phosphate. This is 3-hexulose-6-phosphate synthase from Staphylococcus aureus (strain USA300).